The primary structure comprises 103 residues: Large ribosomal subunit protein uL24 (103 aa).

This sequence belongs to the universal ribosomal protein uL24 family. Part of the 50S ribosomal subunit.

Functionally, one of two assembly initiator proteins, it binds directly to the 5'-end of the 23S rRNA, where it nucleates assembly of the 50S subunit. One of the proteins that surrounds the polypeptide exit tunnel on the outside of the subunit. This is Large ribosomal subunit protein uL24 from Alkaliphilus metalliredigens (strain QYMF).